We begin with the raw amino-acid sequence, 689 residues long: Protein SDA1 homolog (689 aa).

Disordered regions lie at residues 227–260 (DEKK…TKNK), 485–512 (EQEK…DGEW), and 623–689 (TDRK…RLMK). Residues 258–319 (KNKKKLDKAM…RFEVKLMHMD (62 aa)) are a coiled coil. The segment covering 492–512 (PEEDDGWESASLSDDDEDGEW) has biased composition (acidic residues). Residues 670–681 (RDKQIALRDSLL) show a composition bias toward basic and acidic residues.

This sequence belongs to the SDA1 family.

The protein resides in the nucleus. It is found in the nucleolus. In terms of biological role, required for 60S pre-ribosomal subunits export to the cytoplasm. The chain is Protein SDA1 homolog (sdad1) from Xenopus laevis (African clawed frog).